A 551-amino-acid chain; its full sequence is MFS-type transporter ATEG_00331 (551 aa).

The first 18 residues, 1-18, serve as a signal peptide directing secretion; sequence MKAWLLVSSLCLSTFIAA. 4 helical membrane-spanning segments follow: residues 40 to 60, 71 to 91, 102 to 122, and 132 to 152; these read LEFT…TPPW, PVLM…ALAI, IQGT…GDVF, and GVLG…GGAF. N-linked (GlcNAc...) asparagine glycans are attached at residues asparagine 165 and asparagine 178. A run of 8 helical transmembrane segments spans residues 179-199, 206-228, 233-255, 324-344, 354-374, 380-400, 417-437, and 493-513; these read LTTS…FLEV, IIEG…TVMF, GYGG…FGIG, VYLL…GLYI, IYFG…LQPY, IIIF…APII, TVFF…GVIF, and SEWI…VFIS. Residue asparagine 524 is glycosylated (N-linked (GlcNAc...) asparagine).

It belongs to the major facilitator superfamily. TCR/Tet family.

Its subcellular location is the membrane. Its function is as follows. MFS-type transporter; part of the gene cluster that mediates the biosynthesis of isoflavipucine. This is MFS-type transporter ATEG_00331 from Aspergillus terreus (strain NIH 2624 / FGSC A1156).